The following is a 151-amino-acid chain: MNPKIIVLNPEKCTKCYDCINICKEIHGESRVRKVDGIPIFCMQCENAPCKEICPVDAIYLKDGIPIVDKERCIACGMCAIACPIGAIFIKNRVAHKCTLCLDVDRITPACVEACKDKALLLVSEETLDMMKEEKRKKILKILREEAKENL.

4Fe-4S ferredoxin-type domains are found at residues 4 to 32, 33 to 63, and 64 to 93; these read KIIV…ESRV, RKVD…YLKD, and GIPI…IKNR. [4Fe-4S] cluster is bound by residues Cys13, Cys16, Cys19, Cys23, Cys42, Cys45, Cys50, Cys54, Cys73, Cys76, Cys79, Cys83, Cys98, Cys101, Cys111, and Cys115.

It depends on [4Fe-4S] cluster as a cofactor.

This is an uncharacterized protein from Methanocaldococcus jannaschii (strain ATCC 43067 / DSM 2661 / JAL-1 / JCM 10045 / NBRC 100440) (Methanococcus jannaschii).